We begin with the raw amino-acid sequence, 38 residues long: Large ribosomal subunit protein bL36 (38 aa).

Belongs to the bacterial ribosomal protein bL36 family.

This is Large ribosomal subunit protein bL36 from Methylacidiphilum infernorum (isolate V4) (Methylokorus infernorum (strain V4)).